The following is a 190-amino-acid chain: Small ribosomal subunit protein eS7 (190 aa).

Belongs to the eukaryotic ribosomal protein eS7 family.

In Manduca sexta (Tobacco hawkmoth), this protein is Small ribosomal subunit protein eS7 (RpS7).